The chain runs to 137 residues: MLQPKRTKFRKVHKGRNRGLANAGSDVSFGTYGLKAVTRGQLTARQIEAARRAMTRAVKRQGKIWIRVFPDKPITEKPLEVRMGKGKGNVEYWVALIQPGKVLYEMDGVPEETAREAFALAAAKLSVKTTFVIRTAM.

This sequence belongs to the universal ribosomal protein uL16 family. As to quaternary structure, part of the 50S ribosomal subunit.

In terms of biological role, binds 23S rRNA and is also seen to make contacts with the A and possibly P site tRNAs. The sequence is that of Large ribosomal subunit protein uL16 from Tolumonas auensis (strain DSM 9187 / NBRC 110442 / TA 4).